The chain runs to 116 residues: Phosphoribosyl-AMP cyclohydrolase (116 aa).

Position 85 (aspartate 85) interacts with Mg(2+). Cysteine 86 serves as a coordination point for Zn(2+). 2 residues coordinate Mg(2+): aspartate 87 and aspartate 89. Zn(2+) is bound by residues cysteine 102 and cysteine 109.

This sequence belongs to the PRA-CH family. Homodimer. Mg(2+) serves as cofactor. It depends on Zn(2+) as a cofactor.

It localises to the cytoplasm. It catalyses the reaction 1-(5-phospho-beta-D-ribosyl)-5'-AMP + H2O = 1-(5-phospho-beta-D-ribosyl)-5-[(5-phospho-beta-D-ribosylamino)methylideneamino]imidazole-4-carboxamide. Its pathway is amino-acid biosynthesis; L-histidine biosynthesis; L-histidine from 5-phospho-alpha-D-ribose 1-diphosphate: step 3/9. Functionally, catalyzes the hydrolysis of the adenine ring of phosphoribosyl-AMP. This Thermobifida fusca (strain YX) protein is Phosphoribosyl-AMP cyclohydrolase.